Consider the following 314-residue polypeptide: tRNA pseudouridine synthase B (314 aa).

Asp-41 (nucleophile) is an active-site residue.

Belongs to the pseudouridine synthase TruB family. Type 1 subfamily.

The enzyme catalyses uridine(55) in tRNA = pseudouridine(55) in tRNA. Its function is as follows. Responsible for synthesis of pseudouridine from uracil-55 in the psi GC loop of transfer RNAs. This Prochlorococcus marinus (strain NATL1A) protein is tRNA pseudouridine synthase B.